Here is a 433-residue protein sequence, read N- to C-terminus: Probable mannose-6-phosphate isomerase (433 aa).

Gln103, His105, Glu130, and His277 together coordinate Zn(2+). Arg296 is a catalytic residue.

It belongs to the mannose-6-phosphate isomerase type 1 family. Requires Zn(2+) as cofactor.

The protein resides in the cytoplasm. The catalysed reaction is D-mannose 6-phosphate = D-fructose 6-phosphate. Its pathway is nucleotide-sugar biosynthesis; GDP-alpha-D-mannose biosynthesis; alpha-D-mannose 1-phosphate from D-fructose 6-phosphate: step 1/2. Functionally, involved in the synthesis of the GDP-mannose and dolichol-phosphate-mannose required for a number of critical mannosyl transfer reactions. This chain is Probable mannose-6-phosphate isomerase (PMIH), found in Echinococcus multilocularis (Fox tapeworm).